Here is a 295-residue protein sequence, read N- to C-terminus: MPYQQITVNVNDAVAERLADALMEHGALSAAIEDAYAGTQNEQAIFGEPGMPAEQIWQQSKVIALFGEHDEAAAIIQTATQECGLKDLAYTGETIEDQDWVRLTQSQFDPIRISDRLWITPSWHEVPEGSAVNLRLDPGLAFGTGSHPTTRLCLKWLDTQLKNGESVLDYGCGSGILTIAALKLGAGFAVGVDIDEQAVRAGKDNAAQNNVDAQFFLPDGLPQGQFDVVVANILANPLRMLGEMLAARTKQGGRIVLSGLLDEQAEELGGIYSQWFDLDPAETEEGWARLSGVKR.

Thr-150, Gly-171, Asp-193, and Asn-232 together coordinate S-adenosyl-L-methionine.

This sequence belongs to the methyltransferase superfamily. PrmA family.

It localises to the cytoplasm. It catalyses the reaction L-lysyl-[protein] + 3 S-adenosyl-L-methionine = N(6),N(6),N(6)-trimethyl-L-lysyl-[protein] + 3 S-adenosyl-L-homocysteine + 3 H(+). In terms of biological role, methylates ribosomal protein L11. The chain is Ribosomal protein L11 methyltransferase from Neisseria meningitidis serogroup B (strain ATCC BAA-335 / MC58).